Here is a 158-residue protein sequence, read N- to C-terminus: uncharacterized protein (158 aa).

The region spanning 13-110 (ESVGRALELV…WGDEYLPRPE (98 aa)) is the HTH hxlR-type domain.

This is an uncharacterized protein from Mycobacterium tuberculosis (strain CDC 1551 / Oshkosh).